Here is a 1214-residue protein sequence, read N- to C-terminus: Brassinosteroid LRR receptor kinase BRL3 (1214 aa).

A signal peptide spans 1-29 (MAAVRVVAPAPSVLLLVAAAVVLLHLARA). Asn-61 is a glycosylation site (N-linked (GlcNAc...) asparagine). The short motif at 69-76 (CAWAGVSC) is the Cys pair 1 element. LRR repeat units lie at residues 103 to 127 (LSAL…GSPR), 131 to 155 (PCAL…FLAS), 156 to 177 (CGGL…YPFP), 178 to 202 (PSLR…SLTG), 204 to 228 (HGIQ…PCTE), 230 to 250 (SVLD…FVAM), 252 to 276 (PANL…EFGG), 277 to 302 (CANL…LVDC), 303 to 325 (RRLE…TFLV), 327 to 351 (LQAL…LSIL), 353 to 375 (KTLV…SFGQ), 377 to 400 (RFLQ…VITN), 401 to 427 (ISSL…ASRC), 429 to 451 (LLEV…LCSS), 452 to 476 (LPSL…LSNC), 478 to 500 (NLES…ILFL), 502 to 525 (KLVD…CFNS), 526 to 549 (TALE…ITRC), 550 to 572 (VNLI…GFGN), 573 to 597 (LQNL…LGSC), 599 to 621 (NLIW…LAAQ), and 650 to 673 (GVLF…HLCS). 4 N-linked (GlcNAc...) asparagine glycosylation sites follow: Asn-145, Asn-163, Asn-197, and Asn-210. N-linked (GlcNAc...) asparagine glycosylation is found at Asn-254, Asn-264, and Asn-279. N-linked (GlcNAc...) asparagine glycans are attached at residues Asn-400 and Asn-413. An N-linked (GlcNAc...) asparagine glycan is attached at Asn-466. N-linked (GlcNAc...) asparagine glycans are attached at residues Asn-512 and Asn-524. Asn-561 carries N-linked (GlcNAc...) asparagine glycosylation. Residue Tyr-678 participates in brassinolide binding. 4 LRR repeats span residues 689–712 (NGSM…SFGN), 713–736 (MTYL…AFTG), 738–760 (KGIG…GFGC), and 762–786 (HFLA…QLIT). The short motif at 799–806 (CGIPLNPC) is the Cys pair 2 element. Residues 829-849 (SVFLAVTLSVLILFSLLIIHY) form a helical membrane-spanning segment. In terms of domain architecture, Protein kinase spans 913-1196 (FCAETLIGSG…FQVDSGSNFL (284 aa)). Residues 919–927 (IGSGGFGEV), Lys-941, 987–989 (EYM), 993–996 (SLDF), 1039–1044 (DMKSSN), and Asp-1057 each bind ATP. Asp-1039 (proton acceptor) is an active-site residue.

This sequence belongs to the protein kinase superfamily. Ser/Thr protein kinase family. Highly expressed in roots. Expressed at low levels in shoots.

It is found in the cell membrane. The enzyme catalyses L-seryl-[protein] + ATP = O-phospho-L-seryl-[protein] + ADP + H(+). It catalyses the reaction L-threonyl-[protein] + ATP = O-phospho-L-threonyl-[protein] + ADP + H(+). Functionally, may be involved in brassenosteroid (BR) perception in roots. The polypeptide is Brassinosteroid LRR receptor kinase BRL3 (Oryza sativa subsp. japonica (Rice)).